Consider the following 286-residue polypeptide: MERRVRVKSWVEENRASFQPPVCNKLMHQEQLKIMFVGGPNTRKDYHIEEGEEVFYQLEGDMILRVLEQGQHRDVPIRQGEIFLLPARVPHSPQRFANTMGLVIERRRLESELDGLRYYVGDTEDVLFEKWFHCKDLGTQLAPIIQEFFHSEQYRTGKPNPDQLLKELPFPLNTRSIMKPMSLKAWLDGHSRELQAGTSLSLFGDSYETQVIAHGQGSSKGPRQDVDVWLWQQEGSSKVTMGGQCIALAPDDSLLVPAGTSYVWERAQGSVALSVTQDPARKKPWW.

The domain A (catalytic) stretch occupies residues 1–160 (MERRVRVKSW…SEQYRTGKPN (160 aa)). An O2-binding site is contributed by Arg43. 3 residues coordinate Fe cation: His47, Glu53, and His91. Position 53 (Glu53) interacts with substrate. The substrate site is built by Arg95 and Glu105. The tract at residues 161–177 (PDQLLKELPFPLNTRSI) is linker. Residues 178-286 (MKPMSLKAWL…QDPARKKPWW (109 aa)) form a domain B region.

It belongs to the 3-HAO family. Monomer. Requires Fe(2+) as cofactor.

It is found in the cytoplasm. It localises to the cytosol. It carries out the reaction 3-hydroxyanthranilate + O2 = (2Z,4Z)-2-amino-3-carboxymuconate 6-semialdehyde. It functions in the pathway cofactor biosynthesis; NAD(+) biosynthesis; quinolinate from L-kynurenine: step 3/3. In terms of biological role, catalyzes the oxidative ring opening of 3-hydroxyanthranilate to 2-amino-3-carboxymuconate semialdehyde, which spontaneously cyclizes to quinolinate. The sequence is that of 3-hydroxyanthranilate 3,4-dioxygenase (Haao) from Mus musculus (Mouse).